Consider the following 258-residue polypeptide: Dihydroorotate dehydrogenase B (NAD(+)), electron transfer subunit (258 aa).

Residues 1–101 (MKKAYLTVVS…LGPLGNGYDP (101 aa)) enclose the FAD-binding FR-type domain. Residues 52-55 (RPIS), 69-71 (IYR), and 76-77 (GT) contribute to the FAD site. [2Fe-2S] cluster contacts are provided by Cys-220, Cys-225, Cys-228, and Cys-243.

The protein belongs to the PyrK family. In terms of assembly, heterotetramer of 2 PyrK and 2 PyrD type B subunits. The cofactor is [2Fe-2S] cluster. FAD is required as a cofactor.

Its pathway is pyrimidine metabolism; UMP biosynthesis via de novo pathway; orotate from (S)-dihydroorotate (NAD(+) route): step 1/1. Responsible for channeling the electrons from the oxidation of dihydroorotate from the FMN redox center in the PyrD type B subunit to the ultimate electron acceptor NAD(+). This is Dihydroorotate dehydrogenase B (NAD(+)), electron transfer subunit from Bacillus pumilus (strain SAFR-032).